A 184-amino-acid polypeptide reads, in one-letter code: Photosystem I assembly protein Ycf4 (184 aa).

The next 2 helical transmembrane spans lie at 19-39 and 57-77; these read ISNF…LLVG and IIFF…LFIS.

This sequence belongs to the Ycf4 family.

It localises to the plastid. The protein resides in the chloroplast thylakoid membrane. Functionally, seems to be required for the assembly of the photosystem I complex. In Drimys granadensis, this protein is Photosystem I assembly protein Ycf4.